Here is a 113-residue protein sequence, read N- to C-terminus: U11-theraphotoxin-Hhn1a (113 aa).

Positions 1 to 21 are cleaved as a signal peptide; that stretch reads MNTVRVTFLLVFVLAVSLGQA. A propeptide spanning residues 22 to 74 is cleaved from the precursor; sequence DKDENRMVMQEKTEQGKSYLDFAENLLLQKLEELEAKLLEEDSEESRNSRQKR. 3 disulfides stabilise this stretch: Cys-75–Cys-90, Cys-82–Cys-95, and Cys-89–Cys-110.

It belongs to the neurotoxin 14 (magi-1) family. 01 (HNTX-16) subfamily. In terms of tissue distribution, expressed by the venom gland.

Its subcellular location is the secreted. Its function is as follows. Probable ion channel inhibitor. The sequence is that of U11-theraphotoxin-Hhn1a from Cyriopagopus hainanus (Chinese bird spider).